The following is a 160-amino-acid chain: Transcriptional repressor NrdR (160 aa).

A zinc finger spans residues 3–34 (CPFCRHADTQVVDSRVSEDGATIRRRRRCPAC). Positions 49–139 (PSVVKKDGSR…VYRRFEDVSE (91 aa)) constitute an ATP-cone domain.

Belongs to the NrdR family. Zn(2+) serves as cofactor.

Functionally, negatively regulates transcription of bacterial ribonucleotide reductase nrd genes and operons by binding to NrdR-boxes. This is Transcriptional repressor NrdR from Paraburkholderia phytofirmans (strain DSM 17436 / LMG 22146 / PsJN) (Burkholderia phytofirmans).